A 562-amino-acid chain; its full sequence is MRSDMIKKGDHQAPARSLLHATGALKSPTDMNKPFVAICNSYIDIVPGHVHLRELADIAKEAIREAGAIPFEFNTIGVDDGIAMGHIGMRYSLPSREIIADAAETVINAHWFDGVFYIPNCDKITPGMILAAMRTNVPAIFCSGGPMKAGLSAHGKALTLSSMFEAVGAFKEGSISKEEFLDMEQNACPTCGSCAGMFTANSMNCLMEVLGLTLPYNGTALAVSDQRREMIRQAAFKLVENIKNDLKPRDIVTREAIDDAFALDMAMGGSTNTVLHTLAIANEAGIDYDLERINAIAKRTPYLSKIAPSSSYSMHDVHEAGGVPAIINELMKKDGTLHPDRITVTGKTLRENNEGKEIKNFDVIHPLDAPYDAQGGLSILFGNIAPKGAVIKVGGVDPSIKTFTGKAICFNSHDEAVEAIDNRTVRAGHVVVIRYEGPKGGPGMPEMLAPTSSIVGRGLGKDVALITDGRFSGATRGIAVGHISPEAASGGPIALIEDGDEITIDLTNRTLNVNQPEDVLARRRESLTPFKAKVKTGYLARYTALVTSANTGGVMQVPENLI.

Residue Asp80 participates in Mg(2+) binding. [2Fe-2S] cluster is bound at residue Cys121. 2 residues coordinate Mg(2+): Asp122 and Lys123. Lys123 is subject to N6-carboxylysine. Cys194 contributes to the [2Fe-2S] cluster binding site. Glu446 contacts Mg(2+). Catalysis depends on Ser472, which acts as the Proton acceptor.

The protein belongs to the IlvD/Edd family. In terms of assembly, homodimer. It depends on [2Fe-2S] cluster as a cofactor. Mg(2+) serves as cofactor.

It catalyses the reaction (2R)-2,3-dihydroxy-3-methylbutanoate = 3-methyl-2-oxobutanoate + H2O. The enzyme catalyses (2R,3R)-2,3-dihydroxy-3-methylpentanoate = (S)-3-methyl-2-oxopentanoate + H2O. Its pathway is amino-acid biosynthesis; L-isoleucine biosynthesis; L-isoleucine from 2-oxobutanoate: step 3/4. It functions in the pathway amino-acid biosynthesis; L-valine biosynthesis; L-valine from pyruvate: step 3/4. Functionally, functions in the biosynthesis of branched-chain amino acids. Catalyzes the dehydration of (2R,3R)-2,3-dihydroxy-3-methylpentanoate (2,3-dihydroxy-3-methylvalerate) into 2-oxo-3-methylpentanoate (2-oxo-3-methylvalerate) and of (2R)-2,3-dihydroxy-3-methylbutanoate (2,3-dihydroxyisovalerate) into 2-oxo-3-methylbutanoate (2-oxoisovalerate), the penultimate precursor to L-isoleucine and L-valine, respectively. The protein is Dihydroxy-acid dehydratase of Staphylococcus aureus (strain USA300 / TCH1516).